The following is a 163-amino-acid chain: MSNINLATLDISEHPNLPSSSAVLFEAKAKKKLSFEAIASAIGRNEVATAAIFYGQAKASAEDIVKLSEVLGIDHLYLESLLSGFPDRGKSMTFPPKDPLIYRLFEIVQNYGYAYKAVMNEKFGDGIMSAISFSTKVEKETDLDGNNWAVVTWRGKWLPYSRF.

Residues arginine 103, glutamate 106, and serine 129 contribute to the active site.

The protein belongs to the cyanase family.

It catalyses the reaction cyanate + hydrogencarbonate + 3 H(+) = NH4(+) + 2 CO2. Its function is as follows. Catalyzes the reaction of cyanate with bicarbonate to produce ammonia and carbon dioxide. The chain is Cyanate hydratase from Paracoccidioides brasiliensis (strain Pb18).